A 221-amino-acid chain; its full sequence is Pectate lyase C (221 aa).

A signal peptide spans 1–28 (MKRLAGTVILSGLLVCGFGQALPEKALA).

Belongs to the polysaccharide lyase 3 family. Ca(2+) is required as a cofactor.

Its subcellular location is the secreted. It carries out the reaction Eliminative cleavage of (1-&gt;4)-alpha-D-galacturonan to give oligosaccharides with 4-deoxy-alpha-D-galact-4-enuronosyl groups at their non-reducing ends.. The enzyme catalyses Eliminative cleavage of (1-&gt;4)-alpha-D-galacturonan methyl ester to give oligosaccharides with 4-deoxy-6-O-methyl-alpha-D-galact-4-enuronosyl groups at their non-reducing ends.. Its pathway is glycan metabolism; pectin degradation; 2-dehydro-3-deoxy-D-gluconate from pectin: step 2/5. Catalyzes the depolymerization of both polygalacturonate and pectins of methyl esterification degree from 22 to 89%, with an endo mode of action. In contrast to the majority of pectate lyases, displays high activity on highly methylated pectins. The protein is Pectate lyase C (pelC) of Bacillus licheniformis (strain ATCC 14580 / DSM 13 / JCM 2505 / CCUG 7422 / NBRC 12200 / NCIMB 9375 / NCTC 10341 / NRRL NRS-1264 / Gibson 46).